The sequence spans 260 residues: Sphinganine C4-monooxygenase 1 (260 aa).

3 consecutive transmembrane segments (helical) span residues 11 to 31 (LLGT…YVAL), 55 to 75 (SVVK…ILLF), and 92 to 112 (FLVL…WQYF). In terms of domain architecture, Fatty acid hydroxylase spans 99–235 (FVTAMIVLDT…FVMWDRILGT (137 aa)). The Histidine box-1 signature appears at 114–118 (HRYMH). The short motif at 128 to 132 (HSQHH) is the Histidine box-2 element. The short motif at 207–213 (YHDIHHQ) is the Histidine box-3 element.

The protein belongs to the sterol desaturase family. Fe cation is required as a cofactor. As to expression, ubiquitous, with higher levels in flowers and roots.

It localises to the endoplasmic reticulum membrane. The catalysed reaction is a dihydroceramide + 2 Fe(II)-[cytochrome b5] + O2 + 2 H(+) = a phytoceramide + 2 Fe(III)-[cytochrome b5] + H2O. Its pathway is membrane lipid metabolism; sphingolipid biosynthesis. In terms of biological role, involved in sphingolipid trihydroxy long-chain base (4-hydroxysphinganine) biosynthesis. Can use C18- and C20-sphinganine as substrates to produce C18- and C20-phytosphinganines (D-ribo-2-amino-1,3,4-trihydroxyoctadecane and -eicosane). The chain is Sphinganine C4-monooxygenase 1 (SBH1) from Arabidopsis thaliana (Mouse-ear cress).